The sequence spans 154 residues: Ubiquitin-conjugating enzyme E2 L5 (154 aa).

Residues 2-149 enclose the UBC core domain; it reads AASRRLMKEL…AEEFTKKYGE (148 aa). Cys86 functions as the Glycyl thioester intermediate in the catalytic mechanism.

Belongs to the ubiquitin-conjugating enzyme family.

The enzyme catalyses S-ubiquitinyl-[E1 ubiquitin-activating enzyme]-L-cysteine + [E2 ubiquitin-conjugating enzyme]-L-cysteine = [E1 ubiquitin-activating enzyme]-L-cysteine + S-ubiquitinyl-[E2 ubiquitin-conjugating enzyme]-L-cysteine.. Its pathway is protein modification; protein ubiquitination. Functionally, catalyzes the covalent attachment of ubiquitin to other proteins. The sequence is that of Ubiquitin-conjugating enzyme E2 L5 from Homo sapiens (Human).